The following is a 478-amino-acid chain: UDP-N-acetylmuramate--L-alanine ligase (478 aa).

112-118 provides a ligand contact to ATP; that stretch reads GTHGKTT.

The protein belongs to the MurCDEF family.

Its subcellular location is the cytoplasm. The catalysed reaction is UDP-N-acetyl-alpha-D-muramate + L-alanine + ATP = UDP-N-acetyl-alpha-D-muramoyl-L-alanine + ADP + phosphate + H(+). The protein operates within cell wall biogenesis; peptidoglycan biosynthesis. Cell wall formation. In Polynucleobacter asymbioticus (strain DSM 18221 / CIP 109841 / QLW-P1DMWA-1) (Polynucleobacter necessarius subsp. asymbioticus), this protein is UDP-N-acetylmuramate--L-alanine ligase.